The chain runs to 959 residues: Protein NLP7 (959 aa).

Residues 1-22 form a disordered region; that stretch reads MCEPDDNSARNGVTTQPSRSRE. The span at 9-18 shows a compositional bias: polar residues; that stretch reads ARNGVTTQPS. The 82-residue stretch at 578–659 folds into the RWP-RK domain; that stretch reads KKKTEKKRGK…IESVQGTDGG (82 aa). A coiled-coil region spans residues 633 to 654; the sequence is SRKIKKVNRSITKLKRVIESVQ. 3 stretches are compositionally biased toward polar residues: residues 673–687, 694–703, and 735–745; these read THGQ…SPNG, PNTNNSPNHW, and GTPTSHGSCDG. Residues 673–760 form a disordered region; sequence THGQTSAQPL…PKVPNQDPLF (88 aa). The PB1 domain occupies 863–945; the sequence is TVTIKASYKD…KIVRLLVHDV (83 aa).

In terms of assembly, interacts with NRG2. In terms of tissue distribution, expressed in roots, stems, leaves, flowers and siliques. Detected in root hairs, emerging secondary roots, vascular tissues, leaf parenchyma cells and stomata.

The protein localises to the nucleus. Functionally, transcription factor involved in regulation of nitrate assimilation and in transduction of the nitrate signal. This Arabidopsis thaliana (Mouse-ear cress) protein is Protein NLP7 (NLP7).